A 1091-amino-acid chain; its full sequence is Sodium/potassium exporting P-type ATPase 5 (1091 aa).

At methionine 1 to lysine 63 the chain is on the cytoplasmic side. A helical transmembrane segment spans residues alanine 64–isoleucine 84. The Extracellular segment spans residues serine 85–aspartate 90. The chain crosses the membrane as a helical span at residues tryptophan 91–glutamine 111. Residues glutamate 112–lysine 282 are Cytoplasmic-facing. Residues leucine 283 to alanine 303 form a helical membrane-spanning segment. Over serine 304–arginine 312 the chain is Extracellular. A helical transmembrane segment spans residues valine 313 to leucine 333. Residues threonine 334 to phenylalanine 815 are Cytoplasmic-facing. The 4-aspartylphosphate intermediate role is filled by aspartate 369. Mg(2+) is bound by residues aspartate 369 and threonine 371. Residues threonine 371 and glutamate 483 each coordinate ATP. The segment at alanine 499–glycine 525 is disordered. The segment covering glutamate 503–glutamine 519 has biased composition (polar residues). ATP-binding residues include lysine 561, arginine 606, threonine 673, glycine 674, aspartate 675, arginine 732, and lysine 738. A Mg(2+)-binding site is contributed by aspartate 757. Position 760 (asparagine 760) interacts with ATP. The chain crosses the membrane as a helical span at residues valine 816–phenylalanine 836. At arginine 837 to serine 848 the chain is on the extracellular side. A helical membrane pass occupies residues proline 849 to leucine 869. Over glutamate 870 to glutamate 885 the chain is Cytoplasmic. The helical transmembrane segment at valine 886–glycine 906 threads the bilayer. Residues serine 907–arginine 943 are Extracellular-facing. A helical membrane pass occupies residues serine 944–methionine 964. Residues arginine 965–phenylalanine 991 lie on the Cytoplasmic side of the membrane. The helical transmembrane segment at leucine 992–isoleucine 1012 threads the bilayer. Topologically, residues asparagine 1013–proline 1021 are extracellular. A helical membrane pass occupies residues isoleucine 1022–leucine 1042. The Cytoplasmic segment spans residues tyrosine 1043–histidine 1091.

It belongs to the cation transport ATPase (P-type) (TC 3.A.3) family. Type IID subfamily. Mg(2+) serves as cofactor. In terms of processing, the active site is phosphorylated in presence of sodium or potassium and in conditions of higher pH. Not phosphorylated in presence of calcium ions.

The protein resides in the cell membrane. The enzyme catalyses Na(+)(in) + ATP + H2O = Na(+)(out) + ADP + phosphate + H(+). It catalyses the reaction K(+)(in) + ATP + H2O = K(+)(out) + ADP + phosphate + H(+). In terms of biological role, catalyzes the hydrolysis of ATP coupled with the export of sodium and potassium from the cell. May export potassium less efficiently. May transport other cations such as lithium. Sodium/potassium efflux ATPases are involved in salt tolerance and maintaining the membrane potential across the plasma membrane in high salinity (Na+) or alkaline (K+) environments. The sequence is that of Sodium/potassium exporting P-type ATPase 5 from Saccharomyces cerevisiae (strain ATCC 204508 / S288c) (Baker's yeast).